Consider the following 345-residue polypeptide: Gibberellin 2-beta-dioxygenase 2 (345 aa).

Residues 170–285 (HSDSLLRINH…RMSMMYFAAP (116 aa)) enclose the Fe2OG dioxygenase domain. Fe cation-binding residues include histidine 209, aspartate 211, and histidine 266. The active site involves arginine 276.

This sequence belongs to the iron/ascorbate-dependent oxidoreductase family. GA2OX subfamily. Fe cation serves as cofactor. As to expression, predominantly expressed in leaves.

It catalyses the reaction gibberellin A1 + 2-oxoglutarate + O2 = gibberellin A8 + succinate + CO2. The protein operates within plant hormone biosynthesis; gibberellin biosynthesis. Its function is as follows. Catalyzes the 2-beta-hydroxylation of several biologically active gibberellins, leading to the homeostatic regulation of their endogenous level. Catabolism of gibberellins (GAs) plays a central role in plant development. Converts GA9/GA20 to GA51/GA29 and GA4/GA1 to GA34/GA8. In Pisum sativum (Garden pea), this protein is Gibberellin 2-beta-dioxygenase 2 (GA2OX2).